The primary structure comprises 252 residues: Hydroxyacylglutathione hydrolase (252 aa).

7 residues coordinate Zn(2+): His-54, His-56, Asp-58, His-59, His-111, Asp-128, and His-166.

Belongs to the metallo-beta-lactamase superfamily. Glyoxalase II family. In terms of assembly, monomer. It depends on Zn(2+) as a cofactor.

The catalysed reaction is an S-(2-hydroxyacyl)glutathione + H2O = a 2-hydroxy carboxylate + glutathione + H(+). Its pathway is secondary metabolite metabolism; methylglyoxal degradation; (R)-lactate from methylglyoxal: step 2/2. Thiolesterase that catalyzes the hydrolysis of S-D-lactoyl-glutathione to form glutathione and D-lactic acid. The polypeptide is Hydroxyacylglutathione hydrolase (Aliivibrio fischeri (strain ATCC 700601 / ES114) (Vibrio fischeri)).